The sequence spans 266 residues: UPF0354 protein lwe1624 (266 aa).

This sequence belongs to the UPF0354 family.

The polypeptide is UPF0354 protein lwe1624 (Listeria welshimeri serovar 6b (strain ATCC 35897 / DSM 20650 / CCUG 15529 / CIP 8149 / NCTC 11857 / SLCC 5334 / V8)).